The chain runs to 186 residues: Elongation factor P (186 aa).

It belongs to the elongation factor P family.

The protein resides in the cytoplasm. It participates in protein biosynthesis; polypeptide chain elongation. Its function is as follows. Involved in peptide bond synthesis. Stimulates efficient translation and peptide-bond synthesis on native or reconstituted 70S ribosomes in vitro. Probably functions indirectly by altering the affinity of the ribosome for aminoacyl-tRNA, thus increasing their reactivity as acceptors for peptidyl transferase. In Shewanella sp. (strain W3-18-1), this protein is Elongation factor P.